Reading from the N-terminus, the 121-residue chain is Type II secretion system protein I (121 aa).

Positions 1 to 6 (MNKQKG) are cleaved as a propeptide — leader sequence. N-methylmethionine is present on methionine 7. A helical membrane pass occupies residues 7–27 (MTLLEVLVALAIFSLAGLTLL).

The protein belongs to the GSP I family. As to quaternary structure, type II secretion is composed of four main components: the outer membrane complex, the inner membrane complex, the cytoplasmic secretion ATPase and the periplasm-spanning pseudopilus. Interacts with core component PulG. Interacts with pseudopilins PulJ and PulK. Post-translationally, cleaved by prepilin peptidase. Methylated by prepilin peptidase at the amino group of the N-terminal methionine once the leader sequence is cleaved by prepilin peptidase.

The protein localises to the cell inner membrane. Component of the type II secretion system required for the energy-dependent secretion of extracellular factors such as proteases and toxins from the periplasm. Part of the pseudopilus tip complex that is critical for the recognition and binding of secretion substrates. In Klebsiella michiganensis (strain ATCC 8724 / DSM 4798 / JCM 20051 / NBRC 3318 / NRRL B-199 / KCTC 1686 / BUCSAV 143 / CCM 1901), this protein is Type II secretion system protein I (pulI).